A 475-amino-acid chain; its full sequence is Eukaryotic translation initiation factor 2 subunit 3 (475 aa).

The region spanning 38-247 is the tr-type G domain; sequence QATINIGTIG…IVNKIPVPPR (210 aa). Residues 47-54 are G1; it reads GHVAHGKS. Residue 50–55 coordinates GTP; that stretch reads AHGKST. The tract at residues 75-79 is G2; it reads NITIK. Positions 133 to 136 are G3; sequence DCPG. GTP-binding positions include 189 to 192 and 224 to 226; these read NKID and SAQ. The interval 189–192 is G4; it reads NKID. Residues 224 to 226 are G5; it reads SAQ. Residues 456–468 are interacts with CDC123; sequence GQIFGGKTITPVL.

This sequence belongs to the TRAFAC class translation factor GTPase superfamily. Classic translation factor GTPase family. EIF2G subfamily. Eukaryotic translation initiation factor 2 eIF2 is a heterotrimeric complex composed of an alpha, a beta and a gamma subunit. The factors eIF-1, eIF-2, eIF-3, TIF5/eIF-5 and methionyl-tRNAi form a multifactor complex (MFC) that may bind to the 40S ribosome.

Its subcellular location is the cytoplasm. The protein resides in the cytosol. It carries out the reaction GTP + H2O = GDP + phosphate + H(+). In terms of biological role, as a subunit of eukaryotic initiation factor 2 eIF2, involved in the early steps of protein synthesis. In the presence of GTP, eIF-2 forms a ternary complex with initiator tRNA Met-tRNAi and then recruits the 40S ribosomal complex and initiation factors eIF-1, eIF-1A and eIF-3 to form the 43S pre-initiation complex (43S PIC), a step that determines the rate of protein translation. The 43S PIC binds to mRNA and scans downstream to the initiation codon, where it forms a 48S initiation complex by codon-anticodon base pairing. This leads to the displacement of eIF-1 to allow GTPase-activating protein (GAP) eIF-5-mediated hydrolysis of eIF2-bound GTP. Hydrolysis of GTP and release of Pi, which makes GTP hydrolysis irreversible, causes the release of the eIF-2-GDP binary complex from the 40S subunit, an event that is essential for the subsequent joining of the 60S ribosomal subunit to form an elongation-competent 80S ribosome. In order for eIF-2 to recycle and catalyze another round of initiation, the GDP bound to eIF-2 must be exchanged with GTP by way of a reaction catalyzed by GDP-GTP exchange factor (GEF) eIF-2B. This is Eukaryotic translation initiation factor 2 subunit 3 from Drosophila melanogaster (Fruit fly).